Reading from the N-terminus, the 535-residue chain is Zinc finger protein squeeze (535 aa).

Composition is skewed to low complexity over residues Met-70–Gln-97 and Ser-131–Ser-142. The disordered stretch occupies residues Met-70–Pro-157. The span at Glu-145–Lys-156 shows a compositional bias: basic and acidic residues. C2H2-type zinc fingers lie at residues Tyr-158–His-180, Tyr-186–His-208, Tyr-214–His-238, Phe-244–His-266, and His-275–His-297. The residue at position 395 (Thr-395) is a Phosphothreonine. A phosphoserine mark is found at Ser-399 and Ser-401. The interval Thr-417–Ser-475 is disordered. Positions Gln-419–Gln-443 are enriched in low complexity. Ser-475 carries the post-translational modification Phosphoserine. A phosphotyrosine mark is found at Tyr-479 and Tyr-481.

The protein belongs to the krueppel C2H2-type zinc-finger protein family. As to quaternary structure, interacts with nab; which acts as a coactivator. Interacts with ap. In terms of tissue distribution, largely restricted to subsets of cells in the CNS throughout embryonic and first instar larval (L1) development. Expressed in a population of lateral interneurons, primarily projecting axons in the anterior and posterior commissures. Overlaps with ap within the thoracic ap cluster. By stage 17, it is restricted to 2 neurons within the ap-cluster, with one neuron typically continuing to display higher levels of expression. Selectively expressed at higher levels within the FMRFa Tv neurons. Expressed in all leucokinergic cells.

The protein resides in the nucleus. Its function is as follows. Transcription factor involved in neuronal fate specification. First required in embryonic CNS development to define the number of cells that express apterous (ap) in the ap thoracic cluster of interneurons. Later on, it plays a central role in the combinatorial code of transcription factors that specifies the fate of the Tv neuron in the ap cluster by participating in the transcription regulation of FMRFa in Tv cells. Also required for projection neuron dendritic targeting. This is Zinc finger protein squeeze (sqz) from Drosophila melanogaster (Fruit fly).